The chain runs to 445 residues: tRNA modification GTPase MnmE (445 aa).

(6S)-5-formyl-5,6,7,8-tetrahydrofolate contacts are provided by Arg-20, Glu-79, and Lys-119. In terms of domain architecture, TrmE-type G spans 215-371; sequence GLKLAIIGPP…ILKNIEEIAE (157 aa). Asn-225 lines the K(+) pocket. Residues 225–230, 244–250, and 269–272 each bind GTP; these read NAGKSS, SNIAGTT, and DTAG. Position 229 (Ser-229) interacts with Mg(2+). Positions 244, 246, and 249 each coordinate K(+). Position 250 (Thr-250) interacts with Mg(2+). Lys-445 contributes to the (6S)-5-formyl-5,6,7,8-tetrahydrofolate binding site.

Belongs to the TRAFAC class TrmE-Era-EngA-EngB-Septin-like GTPase superfamily. TrmE GTPase family. In terms of assembly, homodimer. Heterotetramer of two MnmE and two MnmG subunits. K(+) is required as a cofactor.

The protein resides in the cytoplasm. Its function is as follows. Exhibits a very high intrinsic GTPase hydrolysis rate. Involved in the addition of a carboxymethylaminomethyl (cmnm) group at the wobble position (U34) of certain tRNAs, forming tRNA-cmnm(5)s(2)U34. The polypeptide is tRNA modification GTPase MnmE (Rickettsia bellii (strain RML369-C)).